Here is a 456-residue protein sequence, read N- to C-terminus: Nuclear distribution protein PAC1 (456 aa).

A LisH domain is found at 9-41 (QADELHKSIIAYLSANDLPNTAAALRAELNLTE). Residues 61-88 (TSIVRLQKKIMDLEARNAALQSELDNLT) are a coiled coil. WD repeat units follow at residues 114 to 153 (SHRD…LEMT), 156 to 197 (GHTR…KNVR), 201 to 240 (GHDH…CVRS), 243 to 282 (GHTG…NPEN), 288 to 348 (GHEH…LMTL), 350 to 389 (GHDN…KCVK), 394 to 437 (AHDR…PDVQ), and 439 to 456 (RCVI…IFAA).

This sequence belongs to the WD repeat LIS1/nudF family. In terms of assembly, self-associates. Interacts with NDL1 and dynein.

The protein resides in the cytoplasm. It is found in the cytoskeleton. Its subcellular location is the spindle pole. Its function is as follows. Positively regulates the activity of the minus-end directed microtubule motor protein dynein. May enhance dynein-mediated microtubule sliding by targeting dynein to the microtubule plus end. Required for nuclear migration during vegetative growth as well as development. Required for retrograde early endosome (EE) transport from the hyphal tip. Required for localization of dynein to the mitotic spindle poles. Recruits additional proteins to the dynein complex at SPBs. This is Nuclear distribution protein PAC1 from Ajellomyces capsulatus (strain H143) (Darling's disease fungus).